Reading from the N-terminus, the 651-residue chain is Cylicin-1 (651 aa).

Disordered stretches follow at residues 110 to 241 (LKKA…CSEN) and 267 to 615 (NYSQ…CEPS). Basic and acidic residues-rich tracts occupy residues 111–129 (KKAE…PLKK) and 146–173 (QIVE…EQSK). The span at 186–195 (QNSKTVSKNC) shows a compositional bias: polar residues. Residues 196-205 (SQKDKKDSKN) are compositionally biased toward basic and acidic residues. The segment covering 230 to 241 (SNDPISEICSEN) has biased composition (polar residues). Residues 271–281 (NNSKNYSLKYT) show a composition bias toward low complexity. A run of 8 repeats spans residues 278–305 (LKYT…DSKD), 306–342 (AKKD…DSKD), 343–379 (ERKD…DAKD), 380–417 (ARND…ESKE), 418–453 (SQKD…PKGD), 454–491 (SKKG…SDLE), 492–531 (LKKD…SKTG), and 532–553 (FKTS…YKPG). 6 stretches are compositionally biased toward basic and acidic residues: residues 284 to 308 (TKKD…DAKK), 318 to 331 (KKDD…KDTE), 338 to 368 (GDSK…KYPE), 375 to 402 (GDAK…DAKK), 413 to 441 (LESK…KNDE), and 448 to 482 (SEPK…KNAE). A compositionally biased stretch (basic residues) spans 495–505 (DKKHSKEKKGS). A compositionally biased stretch (basic and acidic residues) spans 506 to 518 (KKDIKKDARKDTE). The span at 529–538 (KTGFKTSTKI) shows a compositional bias: polar residues. The segment at 532 to 553 (FKTSTKIKGSDTESEESLYKPG) is 8 X approximate tandem repeats. Basic and acidic residues predominate over residues 587–607 (TFNEKGEKASTGRVPPSREKP).

Interacts with proteins of spermatozoa head including ACTL7A, CCIN, FAM209A and SPACA1; the interactions may be necessary for proper acrosome attachment to the nuclear envelope. Testis.

The protein localises to the cytoplasm. Its subcellular location is the cytoskeleton. The protein resides in the perinuclear theca. It is found in the calyx. Functionally, plays a role in the establishment of normal sperm morphology during spermatogenesis and is required for acrosome attachment to the nuclear envelope. The chain is Cylicin-1 (CYLC1) from Homo sapiens (Human).